The chain runs to 539 residues: Propionyl-CoA carboxylase beta chain, mitochondrial (539 aa).

The N-terminal 28 residues, 1–28 (MAAAVRVTAARARLRVVVRSLHAGVRSL), are a transit peptide targeting the mitochondrion. In terms of domain architecture, CoA carboxyltransferase N-terminal spans 32–290 (PVSVNERIEN…SNQDPAPIRE (259 aa)). The interval 32 to 533 (PVSVNERIEN…SKKVQRPWRK (502 aa)) is carboxyltransferase. Phosphoserine is present on Ser-71. Lys-99 carries the post-translational modification N6-acetyllysine; alternate. Position 99 is an N6-succinyllysine; alternate (Lys-99). The CoA carboxyltransferase C-terminal domain occupies 294-533 (PSDRLVPELD…SKKVQRPWRK (240 aa)). The interval 325–358 (DERDFFEIMPNYAKNIIVGFARMNGRTVGIVGNQ) is acyl-CoA binding. N6-acetyllysine; alternate is present on residues Lys-474 and Lys-489. An N6-succinyllysine; alternate mark is found at Lys-474 and Lys-489.

This sequence belongs to the AccD/PCCB family. As to quaternary structure, the holoenzyme is a dodecamer composed of 6 PCCA/alpha subunits and 6 PCCB/beta subunits.

The protein localises to the mitochondrion matrix. It catalyses the reaction propanoyl-CoA + hydrogencarbonate + ATP = (S)-methylmalonyl-CoA + ADP + phosphate + H(+). It carries out the reaction butanoyl-CoA + hydrogencarbonate + ATP = (2S)-ethylmalonyl-CoA + ADP + phosphate + H(+). It functions in the pathway metabolic intermediate metabolism; propanoyl-CoA degradation; succinyl-CoA from propanoyl-CoA: step 1/3. In terms of biological role, this is one of the 2 subunits of the biotin-dependent propionyl-CoA carboxylase (PCC), a mitochondrial enzyme involved in the catabolism of odd chain fatty acids, branched-chain amino acids isoleucine, threonine, methionine, and valine and other metabolites. Propionyl-CoA carboxylase catalyzes the carboxylation of propionyl-CoA/propanoyl-CoA to D-methylmalonyl-CoA/(S)-methylmalonyl-CoA. Within the holoenzyme, the alpha subunit catalyzes the ATP-dependent carboxylation of the biotin carried by the biotin carboxyl carrier (BCC) domain, while the beta subunit then transfers the carboxyl group from carboxylated biotin to propionyl-CoA. Propionyl-CoA carboxylase also significantly acts on butyryl-CoA/butanoyl-CoA, which is converted to ethylmalonyl-CoA/(2S)-ethylmalonyl-CoA at a much lower rate. Other alternative minor substrates include (2E)-butenoyl-CoA/crotonoyl-CoA. The sequence is that of Propionyl-CoA carboxylase beta chain, mitochondrial from Sus scrofa (Pig).